Consider the following 554-residue polypeptide: MSQYAPFIKPYIEYNQFGWGPCDMPDMEVPYQPFCKSDRLGKISDWMMPVQEKKYANKYASTFGSNNSQYAYFHEDDDATFHLVDGGNPRALKPYQRNRYRPNQRNNVRVHGRNVRGNAAIGGGQGGAGGTGGAGVGNKYGKGRDMRRGNMGRRFMRNAPVRLRESSVVVRSDWVSIEEIDFPRLLKLSLPNIKDGVDVVTCGTLEYYDKQCDRINVKNERPLQKIDRIINVPGTIDDPIIRRLSKSMGNVFATDDIIATLMCCTRSNYSWDIVIEKLGTKVFLDKRDNAQFDLLTVNETALEPPQDEEGSINSPQSLSLEATLINHNFSQQVLKIGEQEPKHKFDEPNPFEEPGVELASVAYRYKEWQLGDDVVLIARCKHNGVIKSPAGELQFLSIKALNEWDSKAANSVEWRQKLDSQRGAVLASELRNNACKLAKWTVEAVLAGSDQLKLGYVSRVNRKDHLRHVILGMQQFKPQEFATQINLNMDNAWGVLRCLVDIVLKQPDGKYLIMKDPNKPMIRLYDIPDNAFDSDGNDDEETSDDRPFLKSLGN.

The interval 116 to 149 (RGNAAIGGGQGGAGGTGGAGVGNKYGKGRDMRRG) is disordered. The span at 120 to 140 (AIGGGQGGAGGTGGAGVGNKY) shows a compositional bias: gly residues. The segment at 291-305 (QFDLLTVNETALEPP) is RNA gate. Positions 532–554 (FDSDGNDDEETSDDRPFLKSLGN) are disordered.

Belongs to the eIF-3 subunit D family. As to quaternary structure, component of the eukaryotic translation initiation factor 3 (eIF-3) complex. The eIF-3 complex interacts with pix.

Its subcellular location is the cytoplasm. MRNA cap-binding component of the eukaryotic translation initiation factor 3 (eIF-3) complex, which is involved in protein synthesis of a specialized repertoire of mRNAs and, together with other initiation factors, stimulates binding of mRNA and methionyl-tRNAi to the 40S ribosome. The eIF-3 complex specifically targets and initiates translation of a subset of mRNAs involved in cell proliferation. In the eIF-3 complex, eif3d specifically recognizes and binds the 7-methylguanosine cap of a subset of mRNAs. The polypeptide is Eukaryotic translation initiation factor 3 subunit D-2 (Drosophila virilis (Fruit fly)).